Reading from the N-terminus, the 504-residue chain is Peptidyl-prolyl cis-trans isomerase CYP57 (504 aa).

S2 carries the N-acetylserine modification. Residues 16 to 167 (IVNTTHGPID…DPAPKILSVE (152 aa)) form the PPIase cyclophilin-type domain. Residues 204-274 (NLLSFGEEAE…AKKEAAQKDK (71 aa)) adopt a coiled-coil conformation. Basic and acidic residues-rich tracts occupy residues 237–275 (RLLK…KDKS), 344–354 (EDEKPRMEKLS), and 364–374 (AKAEHMEKGDT). Disordered stretches follow at residues 237–374 (RLLK…KGDT), 416–441 (AKPF…KEED), and 482–504 (EKFN…KSLA). The segment covering 416–434 (AKPFTSSNEPVVLTSSSEP) has biased composition (polar residues). A compositionally biased stretch (basic and acidic residues) spans 494 to 504 (REREWSGKSLA).

The protein belongs to the cyclophilin-type PPIase family. As to expression, ubiquitous.

Its subcellular location is the nucleus. The protein localises to the cytoplasm. It carries out the reaction [protein]-peptidylproline (omega=180) = [protein]-peptidylproline (omega=0). PPIases accelerate the folding of proteins. It catalyzes the cis-trans isomerization of proline imidic peptide bonds in oligopeptides. Involved in plant response to pathogen infection by increasing PAD4 expression in absence of EDS1 up-regulation. The chain is Peptidyl-prolyl cis-trans isomerase CYP57 (CYP57) from Arabidopsis thaliana (Mouse-ear cress).